The sequence spans 522 residues: Leucine-rich repeat transmembrane neuronal protein 1 (522 aa).

A signal peptide spans 1–34 (MDFLLLGLCLYWLLRRPSGVVLCLLGACFQMLPA). The region spanning 35–63 (APSGCPQLCRCEGRLLYCEALNPTEAPHN) is the LRRNT domain. The Extracellular segment spans residues 35–427 (APSGCPQLCR…HAENAVQIHK (393 aa)). N-linked (GlcNAc...) asparagine glycosylation occurs at N63. LRR repeat units follow at residues 64–87 (LSGL…QFTG), 89–111 (MQLT…AFQK), 112–135 (LRRV…TFRP), 137–159 (PNLR…LFHG), 161–183 (RKLT…IFQD), 184–207 (CRSL…SFAG), 209–231 (FKLT…HFPR), 233–255 (ISLH…LDWV), 256–278 (WNLK…VFET), and 279–302 (VPHL…ILNS). N-linked (GlcNAc...) asparagine glycosylation occurs at N130. In terms of domain architecture, LRRCT spans 314 to 365 (NLWDCGRNVCALASWLSNFQGRYDGNLQCASPEYAQGEDVLDAVYAFHLCED). N-linked (GlcNAc...) asparagine glycosylation is present at N380. Residues 382 to 401 (SDLGPPASSATTLADGGEGQ) are disordered. A helical transmembrane segment spans residues 428 to 448 (VVTGTMALIFSFLIVVLVLYV). The Cytoplasmic segment spans residues 449 to 522 (SWKCFPASLR…HQQPARECEV (74 aa)).

The protein belongs to the LRRTM family.

The protein resides in the cell membrane. It is found in the postsynaptic cell membrane. In terms of biological role, exhibits strong synaptogenic activity, restricted to excitatory presynaptic differentiation, acting at both pre- and postsynaptic level. The sequence is that of Leucine-rich repeat transmembrane neuronal protein 1 (LRRTM1) from Pongo abelii (Sumatran orangutan).